Here is a 210-residue protein sequence, read N- to C-terminus: Guanylate kinase (210 aa).

The region spanning 5-184 is the Guanylate kinase-like domain; sequence GLLIVFSGPS…AAERVKHIIE (180 aa). An ATP-binding site is contributed by 12 to 19; sequence GPSGVGKG.

Belongs to the guanylate kinase family.

The protein resides in the cytoplasm. The enzyme catalyses GMP + ATP = GDP + ADP. Essential for recycling GMP and indirectly, cGMP. This Streptococcus mutans serotype c (strain ATCC 700610 / UA159) protein is Guanylate kinase.